Consider the following 193-residue polypeptide: Xanthine phosphoribosyltransferase (193 aa).

Leu-20 and Asn-27 together coordinate xanthine. 5-phospho-alpha-D-ribose 1-diphosphate is bound at residue 128-132; the sequence is ASGGT. Lys-156 is a xanthine binding site.

This sequence belongs to the purine/pyrimidine phosphoribosyltransferase family. Xpt subfamily. In terms of assembly, homodimer.

The protein resides in the cytoplasm. The catalysed reaction is XMP + diphosphate = xanthine + 5-phospho-alpha-D-ribose 1-diphosphate. Its pathway is purine metabolism; XMP biosynthesis via salvage pathway; XMP from xanthine: step 1/1. In terms of biological role, converts the preformed base xanthine, a product of nucleic acid breakdown, to xanthosine 5'-monophosphate (XMP), so it can be reused for RNA or DNA synthesis. The protein is Xanthine phosphoribosyltransferase of Deinococcus deserti (strain DSM 17065 / CIP 109153 / LMG 22923 / VCD115).